A 294-amino-acid chain; its full sequence is 4-diphosphocytidyl-2-C-methyl-D-erythritol kinase (294 aa).

K23 is an active-site residue. 106–116 contributes to the ATP binding site; sequence PMGGGLGGGSS. D148 is a catalytic residue.

It belongs to the GHMP kinase family. IspE subfamily.

The catalysed reaction is 4-CDP-2-C-methyl-D-erythritol + ATP = 4-CDP-2-C-methyl-D-erythritol 2-phosphate + ADP + H(+). The protein operates within isoprenoid biosynthesis; isopentenyl diphosphate biosynthesis via DXP pathway; isopentenyl diphosphate from 1-deoxy-D-xylulose 5-phosphate: step 3/6. Catalyzes the phosphorylation of the position 2 hydroxy group of 4-diphosphocytidyl-2C-methyl-D-erythritol. This chain is 4-diphosphocytidyl-2-C-methyl-D-erythritol kinase, found in Nitrosospira multiformis (strain ATCC 25196 / NCIMB 11849 / C 71).